Here is a 198-residue protein sequence, read N- to C-terminus: MNLIPTVIEQTNRGERAYDIYSRLLKDRIIMLGSAIDDNVANSIVSQLLFLEAEDPEKDISIYINSPGGSITAGMAIYDTMQFIKPKVSTICIGMAASMGAFLLAAGEKGKRYALPNSEVMIHQPLGGAQGQATEIEIAAKRILLLRDKLNKVLAERTGQPLEVIERDTDRDNFKSADEALEYGLIDKVLTRNTEDQK.

The Nucleophile role is filled by Ser-98. The active site involves His-123.

This sequence belongs to the peptidase S14 family. In terms of assembly, fourteen ClpP subunits assemble into 2 heptameric rings which stack back to back to give a disk-like structure with a central cavity, resembling the structure of eukaryotic proteasomes.

Its subcellular location is the cytoplasm. It carries out the reaction Hydrolysis of proteins to small peptides in the presence of ATP and magnesium. alpha-casein is the usual test substrate. In the absence of ATP, only oligopeptides shorter than five residues are hydrolyzed (such as succinyl-Leu-Tyr-|-NHMec, and Leu-Tyr-Leu-|-Tyr-Trp, in which cleavage of the -Tyr-|-Leu- and -Tyr-|-Trp bonds also occurs).. Its function is as follows. Cleaves peptides in various proteins in a process that requires ATP hydrolysis. Has a chymotrypsin-like activity. Plays a major role in the degradation of misfolded proteins. This is ATP-dependent Clp protease proteolytic subunit from Bacillus velezensis (strain DSM 23117 / BGSC 10A6 / LMG 26770 / FZB42) (Bacillus amyloliquefaciens subsp. plantarum).